The sequence spans 1321 residues: Indole-3-acetaldehyde oxidase (1321 aa).

The 2Fe-2S ferredoxin-type domain maps to 1-90 (MSLVFAINGQ…HCNITTSEGL (90 aa)). [2Fe-2S] cluster contacts are provided by cysteine 42, cysteine 47, and cysteine 50. The FAD-binding PCMH-type domain occupies 215–404 (VDSGMYRWCS…LSIEIPFWHS (190 aa)).

The protein belongs to the xanthine dehydrogenase family. In terms of assembly, aldehyde oxidases (AO) are homodimers and heterodimers of AO subunits. AO-beta is a AAO1-AAO2 heterodimer; AO-gamma is a AAO2 homodimer. AAO2 also forms a dimer with AAO3. Requires [2Fe-2S] cluster as cofactor. It depends on FAD as a cofactor. Mo-molybdopterin serves as cofactor. In terms of tissue distribution, weakly expressed in roots, leaves and seedlings. In seedlings, mostly expressed in lower part of hypocotyls. Detectable in seeds and mature siliques at low levels.

The protein localises to the cytoplasm. The enzyme catalyses indole-3-acetaldehyde + O2 + H2O = (indol-3-yl)acetate + H2O2 + H(+). With respect to regulation, strongly inhibited by iodoacetate, potassium cyanide (KCN), 2-mercaptoethanol, dithiothreitol (DTT), p-chloromercuribenzoate, menadione and estradiol. Weakly inhibited by 4'-(9-acridinylamino)methanesulfon-m-anisidine (mAMSA) and tritonX-100. Not affected by allopurinol. In terms of biological role, in higher plant aldehyde oxidases (AO) appear to be homo- and heterodimeric assemblies of AO subunits with probably different physiological functions. In vitro, AO-gamma uses heptaldehyde, benzaldehyde, naphthaldehyde and cinnamaldehyde as substrates; AO-beta uses indole-3-acetaldehyde (IAAld), indole-3-aldehyde (IAld) and naphtaldehyde; the AAO2-AAO3 dimer uses abscisic aldehyde. The chain is Indole-3-acetaldehyde oxidase (AAO2) from Arabidopsis thaliana (Mouse-ear cress).